The following is a 54-amino-acid chain: UPF0181 protein PM0480 (54 aa).

It belongs to the UPF0181 family.

This is UPF0181 protein PM0480 from Pasteurella multocida (strain Pm70).